Reading from the N-terminus, the 130-residue chain is Lysozyme C, kidney isozyme (130 aa).

The region spanning 1 to 130 is the C-type lysozyme domain; it reads KVFERCELAR…LTSYIQGCGV (130 aa). Intrachain disulfides connect Cys-6-Cys-128, Cys-30-Cys-116, Cys-65-Cys-81, and Cys-77-Cys-95. Residues Glu-35 and Asp-53 contribute to the active site.

This sequence belongs to the glycosyl hydrolase 22 family. As to quaternary structure, monomer.

It is found in the secreted. The enzyme catalyses Hydrolysis of (1-&gt;4)-beta-linkages between N-acetylmuramic acid and N-acetyl-D-glucosamine residues in a peptidoglycan and between N-acetyl-D-glucosamine residues in chitodextrins.. Functionally, lysozymes have primarily a bacteriolytic function; those in tissues and body fluids are associated with the monocyte-macrophage system and enhance the activity of immunoagents. The sequence is that of Lysozyme C, kidney isozyme from Ovis aries (Sheep).